Consider the following 286-residue polypeptide: 1D-myo-inositol 2-acetamido-2-deoxy-alpha-D-glucopyranoside deacetylase (286 aa).

His12, Asp15, and His147 together coordinate Zn(2+).

It belongs to the MshB deacetylase family. The cofactor is Zn(2+).

It carries out the reaction 1D-myo-inositol 2-acetamido-2-deoxy-alpha-D-glucopyranoside + H2O = 1D-myo-inositol 2-amino-2-deoxy-alpha-D-glucopyranoside + acetate. Its function is as follows. Catalyzes the deacetylation of 1D-myo-inositol 2-acetamido-2-deoxy-alpha-D-glucopyranoside (GlcNAc-Ins) in the mycothiol biosynthesis pathway. The chain is 1D-myo-inositol 2-acetamido-2-deoxy-alpha-D-glucopyranoside deacetylase from Thermobifida fusca (strain YX).